A 168-amino-acid chain; its full sequence is Lipoprotein signal peptidase (168 aa).

3 helical membrane-spanning segments follow: residues 15 to 35 (AIAA…LGLL), 69 to 89 (WGRW…AVWV), and 95 to 115 (PLLA…NLID). Catalysis depends on residues D124 and D141. A helical transmembrane segment spans residues 133–153 (FPWVFNIADSGISVGVALLLL).

This sequence belongs to the peptidase A8 family.

The protein resides in the cell inner membrane. It carries out the reaction Release of signal peptides from bacterial membrane prolipoproteins. Hydrolyzes -Xaa-Yaa-Zaa-|-(S,diacylglyceryl)Cys-, in which Xaa is hydrophobic (preferably Leu), and Yaa (Ala or Ser) and Zaa (Gly or Ala) have small, neutral side chains.. It participates in protein modification; lipoprotein biosynthesis (signal peptide cleavage). In terms of biological role, this protein specifically catalyzes the removal of signal peptides from prolipoproteins. The sequence is that of Lipoprotein signal peptidase from Caulobacter vibrioides (strain ATCC 19089 / CIP 103742 / CB 15) (Caulobacter crescentus).